A 548-amino-acid polypeptide reads, in one-letter code: CTP synthase (548 aa).

The tract at residues 1–266 (MRVNYIFVTG…DNYICKRFNL (266 aa)) is amidoligase domain. Residue serine 14 participates in CTP binding. Serine 14 is a UTP binding site. Residues 15–20 (SLGKGI) and aspartate 72 each bind ATP. Residues aspartate 72 and glutamate 140 each contribute to the Mg(2+) site. Residues 147–149 (DIE), 187–192 (KTKPTQ), and lysine 223 each bind CTP. Residues 187-192 (KTKPTQ) and lysine 223 each bind UTP. In terms of domain architecture, Glutamine amidotransferase type-1 spans 291 to 543 (TVGMVGKYIE…IKAAIEYQHR (253 aa)). Residue glycine 353 coordinates L-glutamine. Residue cysteine 380 is the Nucleophile; for glutamine hydrolysis of the active site. L-glutamine-binding positions include 381–384 (LGMQ), glutamate 404, and arginine 471. Catalysis depends on residues histidine 516 and glutamate 518.

It belongs to the CTP synthase family. In terms of assembly, homotetramer.

The catalysed reaction is UTP + L-glutamine + ATP + H2O = CTP + L-glutamate + ADP + phosphate + 2 H(+). It catalyses the reaction L-glutamine + H2O = L-glutamate + NH4(+). It carries out the reaction UTP + NH4(+) + ATP = CTP + ADP + phosphate + 2 H(+). Its pathway is pyrimidine metabolism; CTP biosynthesis via de novo pathway; CTP from UDP: step 2/2. Allosterically activated by GTP, when glutamine is the substrate; GTP has no effect on the reaction when ammonia is the substrate. The allosteric effector GTP functions by stabilizing the protein conformation that binds the tetrahedral intermediate(s) formed during glutamine hydrolysis. Inhibited by the product CTP, via allosteric rather than competitive inhibition. In terms of biological role, catalyzes the ATP-dependent amination of UTP to CTP with either L-glutamine or ammonia as the source of nitrogen. Regulates intracellular CTP levels through interactions with the four ribonucleotide triphosphates. This is CTP synthase from Blochmanniella pennsylvanica (strain BPEN).